A 351-amino-acid polypeptide reads, in one-letter code: MESTDRSSQAKAFDEAKIGVKGLVDSGITEIPALFRATPATLASLKSPPPPKHLTIPTVDLKGASVVEKIGEAAEKWGLFHLVNHGIPVEVLERMIQGIRGFHEQEPEAKKRFYSRDHTRDVLYFSNHDLQNSEAASWRDTLGCYTAPEPPRLEDLPAVCGEIMLEYSKEIMSLGERLFELLSEALGLNSHHLKDMDCAKSQYMVGQHYPPCPQPDLTIGINKHTDISFLTVLLQDNVGGLQVFHEQYWIDVTPVPGALVINIGDFLQLITNDKFISAEHRVIANGSSEPRTSVAIVFSTFMRAYSRVYGPIKDLLSAENPAKYRDCTLTEFSTIFSSKTLDAPKLHHFKI.

A Fe2OG dioxygenase domain is found at 200 to 304 (KSQYMVGQHY…AIVFSTFMRA (105 aa)). Fe cation-binding residues include H224, D226, and H280. A 2-oxoglutarate-binding site is contributed by R291.

The protein belongs to the iron/ascorbate-dependent oxidoreductase family. Fe(2+) is required as a cofactor.

The sequence is that of 1-aminocyclopropane-1-carboxylate oxidase homolog 4 from Arabidopsis thaliana (Mouse-ear cress).